The sequence spans 469 residues: Neuraminidase (469 aa).

Topologically, residues 1–6 (MNPNQK) are intravirion. Residues 7–29 (IITIGSVSLTIATICFLMQIAIQ) traverse the membrane as a helical segment. The involved in apical transport and lipid raft association stretch occupies residues 11–33 (GSVSLTIATICFLMQIAIQVTTV). The Virion surface portion of the chain corresponds to 30–469 (VTTVTLHFKQ…DGADINLMPI (440 aa)). Residues 36–88 (HFKQYECDSPANNQVMPCEPIIIERNITEIVYLTNTTIEKEICPKLVEYRNWS) are hypervariable stalk region. N-linked (GlcNAc...) asparagine; by host glycosylation is found at N61, N70, and N86. The head of neuraminidase stretch occupies residues 91–469 (QCKITGFAPF…DGADINLMPI (379 aa)). Intrachain disulfides connect C92/C417, C124/C129, C183/C230, C232/C237, C278/C291, C280/C289, C318/C337, and C421/C447. A substrate-binding site is contributed by R118. Residue N146 is glycosylated (N-linked (GlcNAc...) asparagine; by host). D151 acts as the Proton donor/acceptor in catalysis. R152 serves as a coordination point for substrate. N-linked (GlcNAc...) asparagine; by host glycosylation is found at N200 and N234. Substrate is bound at residue 276-277 (EE). R292 serves as a coordination point for substrate. Ca(2+) contacts are provided by D293, G297, and D324. Residue R371 participates in substrate binding. N-linked (GlcNAc...) asparagine; by host glycosylation is present at N402. Y406 functions as the Nucleophile in the catalytic mechanism.

The protein belongs to the glycosyl hydrolase 34 family. In terms of assembly, homotetramer. The cofactor is Ca(2+). Post-translationally, N-glycosylated.

It localises to the virion membrane. It is found in the host apical cell membrane. The catalysed reaction is Hydrolysis of alpha-(2-&gt;3)-, alpha-(2-&gt;6)-, alpha-(2-&gt;8)- glycosidic linkages of terminal sialic acid residues in oligosaccharides, glycoproteins, glycolipids, colominic acid and synthetic substrates.. Its activity is regulated as follows. Inhibited by the neuraminidase inhibitors zanamivir (Relenza) and oseltamivir (Tamiflu). These drugs interfere with the release of progeny virus from infected cells and are effective against all influenza strains. Resistance to neuraminidase inhibitors is quite rare. Functionally, catalyzes the removal of terminal sialic acid residues from viral and cellular glycoconjugates. Cleaves off the terminal sialic acids on the glycosylated HA during virus budding to facilitate virus release. Additionally helps virus spread through the circulation by further removing sialic acids from the cell surface. These cleavages prevent self-aggregation and ensure the efficient spread of the progeny virus from cell to cell. Otherwise, infection would be limited to one round of replication. Described as a receptor-destroying enzyme because it cleaves a terminal sialic acid from the cellular receptors. May facilitate viral invasion of the upper airways by cleaving the sialic acid moieties on the mucin of the airway epithelial cells. Likely to plays a role in the budding process through its association with lipid rafts during intracellular transport. May additionally display a raft-association independent effect on budding. Plays a role in the determination of host range restriction on replication and virulence. Sialidase activity in late endosome/lysosome traffic seems to enhance virus replication. In Aves (whales), this protein is Neuraminidase.